Reading from the N-terminus, the 287-residue chain is MKFGKSLSNQIEETLPEWRDKFLSYKELKKKLKLMEPRSVENRPNKRSRSDSNSVDTDPTVGMTKEELDFISLLEDELEKFNSFFVEQEEEYIIRLKELKDQVAKAKNSNEEMINIKKEIVDFHGEMVLLMNYSALNYTGLAKILKKYDKRTGALIRLPFIQKVLQEPFFTTDLLNTFVKECEAMLDRLFPSNKSRNLDEEGEPTTSGMVKTGTDDSELLRVPKELSEIEYMESLYMKSTVSALKVLKEIRSGSSTVSVFSLPPLPASGLEDDSWKKKVGVLEQVAK.

An SPX domain is found at M1 to Q162. The span at E36 to S50 shows a compositional bias: basic and acidic residues. Disordered stretches follow at residues E36 to V61 and K194 to G213.

The protein localises to the nucleus. In terms of biological role, may inhibit PHR1 DNA-binding activity in a Pi-dependent manner. The polypeptide is SPX domain-containing protein 2 (Arabidopsis thaliana (Mouse-ear cress)).